Consider the following 116-residue polypeptide: Large ribosomal subunit protein bL19 (116 aa).

It belongs to the bacterial ribosomal protein bL19 family.

Its function is as follows. This protein is located at the 30S-50S ribosomal subunit interface and may play a role in the structure and function of the aminoacyl-tRNA binding site. The sequence is that of Large ribosomal subunit protein bL19 from Nocardioides sp. (strain ATCC BAA-499 / JS614).